A 334-amino-acid chain; its full sequence is MIEADRLIQPQIQAQDESIDRAMRPKMLDEYTGQDDTRAQLKVFIQAAKNRNEALDHMLIYGPPGLGKTTLAMIVANEMGVNIKSTSGPVLEKAGDLAALLTNLESGDVLFIDEIHRLSPVVEEILYPAMEDYQLDIMIGEGPAARSIKLDLPPFTLVGATTRAGALTSPLRARFGIPLRLEFYNIKDLSTIVTRSAQVMELDIDAEGAFEIARRSRGTPRIANRLLRRVRDYAQVKHDGAVTKFVAEHALDLLDVDSEGFDYMDRKLLLAIIDKFMGGPVGLDNLAAAIGEERETIEDVLEPFLIQQGFIQRTPRGRIATVRAYQHFELIKPE.

The large ATPase domain (RuvB-L) stretch occupies residues 4 to 184 (ADRLIQPQIQ…FGIPLRLEFY (181 aa)). Residues Arg24, Gly65, Lys68, Thr69, Thr70, 131 to 133 (EDY), Arg174, Tyr184, and Arg221 contribute to the ATP site. Thr69 serves as a coordination point for Mg(2+). The segment at 185–255 (NIKDLSTIVT…VAEHALDLLD (71 aa)) is small ATPAse domain (RuvB-S). A head domain (RuvB-H) region spans residues 258 to 334 (SEGFDYMDRK…YQHFELIKPE (77 aa)). DNA-binding residues include Arg294, Arg313, and Arg318.

This sequence belongs to the RuvB family. In terms of assembly, homohexamer. Forms an RuvA(8)-RuvB(12)-Holliday junction (HJ) complex. HJ DNA is sandwiched between 2 RuvA tetramers; dsDNA enters through RuvA and exits via RuvB. An RuvB hexamer assembles on each DNA strand where it exits the tetramer. Each RuvB hexamer is contacted by two RuvA subunits (via domain III) on 2 adjacent RuvB subunits; this complex drives branch migration. In the full resolvosome a probable DNA-RuvA(4)-RuvB(12)-RuvC(2) complex forms which resolves the HJ.

The protein localises to the cytoplasm. The catalysed reaction is ATP + H2O = ADP + phosphate + H(+). Its function is as follows. The RuvA-RuvB-RuvC complex processes Holliday junction (HJ) DNA during genetic recombination and DNA repair, while the RuvA-RuvB complex plays an important role in the rescue of blocked DNA replication forks via replication fork reversal (RFR). RuvA specifically binds to HJ cruciform DNA, conferring on it an open structure. The RuvB hexamer acts as an ATP-dependent pump, pulling dsDNA into and through the RuvAB complex. RuvB forms 2 homohexamers on either side of HJ DNA bound by 1 or 2 RuvA tetramers; 4 subunits per hexamer contact DNA at a time. Coordinated motions by a converter formed by DNA-disengaged RuvB subunits stimulates ATP hydrolysis and nucleotide exchange. Immobilization of the converter enables RuvB to convert the ATP-contained energy into a lever motion, pulling 2 nucleotides of DNA out of the RuvA tetramer per ATP hydrolyzed, thus driving DNA branch migration. The RuvB motors rotate together with the DNA substrate, which together with the progressing nucleotide cycle form the mechanistic basis for DNA recombination by continuous HJ branch migration. Branch migration allows RuvC to scan DNA until it finds its consensus sequence, where it cleaves and resolves cruciform DNA. This is Holliday junction branch migration complex subunit RuvB from Shewanella baltica (strain OS195).